The primary structure comprises 186 residues: Trafficking protein particle complex subunit 5 (186 aa).

This sequence belongs to the TRAPP small subunits family. BET3 subfamily. As to quaternary structure, part of the multisubunit TRAPP (transport protein particle) complex.

The protein localises to the golgi apparatus. It is found in the cis-Golgi network. It localises to the endoplasmic reticulum. May play a role in vesicular transport from endoplasmic reticulum to Golgi. The polypeptide is Trafficking protein particle complex subunit 5 (trappc5) (Dictyostelium discoideum (Social amoeba)).